A 673-amino-acid polypeptide reads, in one-letter code: RAS guanyl-releasing protein 4 (673 aa).

Basic residues-rich tracts occupy residues methionine 1–serine 10 and glycine 20–threonine 32. Disordered regions lie at residues methionine 1 to proline 34 and leucine 164 to glycine 188. One can recognise an N-terminal Ras-GEF domain in the interval glycine 49–glycine 175. Positions leucine 164 to proline 173 are enriched in low complexity. The Ras-GEF domain maps to glutamate 201–arginine 432. The 36-residue stretch at histidine 466–alanine 501 folds into the EF-hand domain. Residues leucine 540 to cysteine 590 form a Phorbol-ester/DAG-type zinc finger. Positions lysine 592 to serine 633 are disordered.

Belongs to the RASGRP family. Expressed by mast cells and their progenitors (at protein level). Expressed by dendritic cells. As to expression, expressed in neutrophils.

The protein resides in the cytoplasm. It localises to the cell membrane. In terms of biological role, functions as a cation- and diacylglycerol (DAG)-regulated nucleotide exchange factor activating Ras through the exchange of bound GDP for GTP. In neutrophils, participates in a phospholipase C-activating N-formyl peptide-activated GPCR (G protein-coupled receptor) signaling pathway by promoting Ras-mediated activation of PIK3CG/PI3Kgamma to promote neutrophil functional responses. In CD117(+) dendritic cells and mast cells, participates in an lipopolysaccharide (LPS)-activated signaling pathway that stimulates the production of interferon-gamma and other pro-inflammatory cytokines by natural killer (NK) cells. May function in mast cell differentiation. Does not appear to be required for the development of B-cells, DC-cells, T-cells, or NK-cells. Its function is as follows. Binds diacylglycerol (DAG). Unable to bind diacylglycerol (DAG). In Mus musculus (Mouse), this protein is RAS guanyl-releasing protein 4 (Rasgrp4).